The primary structure comprises 85 residues: MNSLLMITACLVLFGTVWSEKGYLVHEDTGCRYKCTFSGENSYCDKECKSQGGDSGICQSKACYCQGLPEDTKTWPLIGKLCGRK.

Residues 1 to 19 (MNSLLMITACLVLFGTVWS) form the signal peptide. One can recognise an LCN-type CS-alpha/beta domain in the interval 20 to 83 (EKGYLVHEDT…TWPLIGKLCG (64 aa)). 4 disulfide bridges follow: Cys-31–Cys-82, Cys-35–Cys-58, Cys-44–Cys-63, and Cys-48–Cys-65. Cys-82 bears the Cysteine amide mark.

The protein belongs to the long (4 C-C) scorpion toxin superfamily. Sodium channel inhibitor family. Beta subfamily. Expressed by the venom gland.

It is found in the secreted. Its function is as follows. Beta toxins bind voltage-independently at site-4 of sodium channels (Nav) and shift the voltage of activation toward more negative potentials thereby affecting sodium channel activation and promoting spontaneous and repetitive firing. This Centruroides sculpturatus (Arizona bark scorpion) protein is Toxin CsE8.